We begin with the raw amino-acid sequence, 542 residues long: Nibrin homolog (542 aa).

One can recognise an FHA domain in the interval 25–90 (YKVGRKGCDI…YGTFVKTDLG (66 aa)). The BRCT domain occupies 119–195 (IYRLSLIPLV…KTIILTNWVM (77 aa)). Residues 409–430 (SRGHMDEKNSSDSVTIRRDRND) are disordered. The tract at residues 465–500 (VDFKRFRKGNVTCGNSFSSLIPFAKDPYKEYDSWDV) is involved in MRE11-binding.

It belongs to the Nibrin family. Component of the MRN complex composed of two heterodimers RAD50 and MRE11 associated with a single NBS1.

The protein localises to the nucleus. It localises to the chromosome. In terms of biological role, component of the MRN complex, which plays a central role in double-strand break (DSB) repair, DNA recombination, maintenance of telomere integrity and meiosis. The MRN complex is involved in the repair of DNA double-strand breaks (DSBs) via homologous recombination (HR), an error-free mechanism which primarily occurs during S and G2 phases. The complex (1) mediates the end resection of damaged DNA, which generates proper single-stranded DNA, a key initial steps in HR, and is (2) required for the recruitment of other repair factors and efficient activation of ATM and ATR upon DNA damage. The MRN complex possesses single-strand endonuclease activity and double-strand-specific 3'-5' exonuclease activity, which are provided by MRE11, to initiate end resection, which is required for single-strand invasion and recombination. Within the MRN complex, NBS1 acts as a protein-protein adapter, which specifically recognizes and binds phosphorylated proteins, promoting their recruitment to DNA damage sites. Recruits MRE11 and RAD50 components of the MRN complex to DSBs in response to DNA damage. This is Nibrin homolog from Arabidopsis thaliana (Mouse-ear cress).